Consider the following 507-residue polypeptide: Bifunctional purine biosynthesis protein PurH (507 aa).

One can recognise an MGS-like domain in the interval methionine 1–valine 144.

The protein belongs to the PurH family.

It catalyses the reaction (6R)-10-formyltetrahydrofolate + 5-amino-1-(5-phospho-beta-D-ribosyl)imidazole-4-carboxamide = 5-formamido-1-(5-phospho-D-ribosyl)imidazole-4-carboxamide + (6S)-5,6,7,8-tetrahydrofolate. The catalysed reaction is IMP + H2O = 5-formamido-1-(5-phospho-D-ribosyl)imidazole-4-carboxamide. Its pathway is purine metabolism; IMP biosynthesis via de novo pathway; 5-formamido-1-(5-phospho-D-ribosyl)imidazole-4-carboxamide from 5-amino-1-(5-phospho-D-ribosyl)imidazole-4-carboxamide (10-formyl THF route): step 1/1. The protein operates within purine metabolism; IMP biosynthesis via de novo pathway; IMP from 5-formamido-1-(5-phospho-D-ribosyl)imidazole-4-carboxamide: step 1/1. The protein is Bifunctional purine biosynthesis protein PurH of Lacticaseibacillus casei (strain BL23) (Lactobacillus casei).